We begin with the raw amino-acid sequence, 337 residues long: Ornithine carbamoyltransferase (337 aa).

Carbamoyl phosphate-binding positions include 57-60, Gln84, Arg108, and 135-138; these read STRT and HPTQ. L-ornithine-binding positions include Asn167, Asp231, and 235–236; that span reads SM. Residues 272–273 and Arg317 each bind carbamoyl phosphate; that span reads CL.

This sequence belongs to the aspartate/ornithine carbamoyltransferase superfamily. OTCase family.

The protein localises to the cytoplasm. The enzyme catalyses carbamoyl phosphate + L-ornithine = L-citrulline + phosphate + H(+). It participates in amino-acid degradation; L-arginine degradation via ADI pathway; carbamoyl phosphate from L-arginine: step 2/2. In terms of biological role, reversibly catalyzes the transfer of the carbamoyl group from carbamoyl phosphate (CP) to the N(epsilon) atom of ornithine (ORN) to produce L-citrulline. In Streptococcus uberis (strain ATCC BAA-854 / 0140J), this protein is Ornithine carbamoyltransferase.